We begin with the raw amino-acid sequence, 93 residues long: uncharacterized protein (93 aa).

The first 22 residues, 1 to 22 (MSIPNLSSVTQLLSIATGLVST), serve as a signal peptide directing secretion. N-linked (GlcNAc...) asparagine; by host glycosylation is present at Asn-5.

This is an uncharacterized protein from Invertebrate iridescent virus 6 (IIV-6).